The chain runs to 523 residues: 2-hydroxyisoflavanone synthase (523 aa).

The helical transmembrane segment at 2 to 22 (LVELAITLLVIALFIHLRPTL) threads the bilayer. Residue cysteine 450 coordinates heme.

This sequence belongs to the cytochrome P450 family. The cofactor is heme.

It is found in the microsome membrane. It carries out the reaction (2S)-liquiritigenin + reduced [NADPH--hemoprotein reductase] + O2 = (2R,3S)-2,4',7-trihydroxyisoflavanone + oxidized [NADPH--hemoprotein reductase] + H2O + H(+). The catalysed reaction is (2S)-naringenin + reduced [NADPH--hemoprotein reductase] + O2 = 2-hydroxy-2,3-dihydrogenistein + oxidized [NADPH--hemoprotein reductase] + H2O + H(+). 2-hydroxyisoflavanone synthase, which catalyzes the hydroxylation associated with 1,2-aryl migration of flavanones. Converts liquiritigenin and naringenin into highly unstable precursors of the isoflavones daidzein and genistein. Acts only on substrates with (2S)-chirality. The protein is 2-hydroxyisoflavanone synthase (CYP93C2) of Glycyrrhiza echinata (Licorice).